We begin with the raw amino-acid sequence, 492 residues long: Probable malate:quinone oxidoreductase 1 (492 aa).

It belongs to the MQO family. It depends on FAD as a cofactor.

The catalysed reaction is (S)-malate + a quinone = a quinol + oxaloacetate. Its pathway is carbohydrate metabolism; tricarboxylic acid cycle; oxaloacetate from (S)-malate (quinone route): step 1/1. The chain is Probable malate:quinone oxidoreductase 1 from Staphylococcus epidermidis (strain ATCC 35984 / DSM 28319 / BCRC 17069 / CCUG 31568 / BM 3577 / RP62A).